A 276-amino-acid chain; its full sequence is Phosphate import ATP-binding protein PstB 2 (276 aa).

Positions 22–262 (MAAVNLTLGF…PKHAETARYV (241 aa)) constitute an ABC transporter domain. Residue 54 to 61 (GPTGSGKT) coordinates ATP.

It belongs to the ABC transporter superfamily. Phosphate importer (TC 3.A.1.7) family. The complex is composed of two ATP-binding proteins (PstB), two transmembrane proteins (PstC and PstA) and a solute-binding protein (PstS).

It localises to the cell membrane. It carries out the reaction phosphate(out) + ATP + H2O = ADP + 2 phosphate(in) + H(+). Part of the ABC transporter complex PstSACB involved in phosphate import. Responsible for energy coupling to the transport system. This Mycobacterium bovis (strain ATCC BAA-935 / AF2122/97) protein is Phosphate import ATP-binding protein PstB 2.